The sequence spans 391 residues: Ferrochelatase (391 aa).

His-196 and Glu-281 together coordinate Fe cation.

Belongs to the ferrochelatase family.

Its subcellular location is the cytoplasm. The enzyme catalyses heme b + 2 H(+) = protoporphyrin IX + Fe(2+). The protein operates within porphyrin-containing compound metabolism; protoheme biosynthesis; protoheme from protoporphyrin-IX: step 1/1. Functionally, catalyzes the ferrous insertion into protoporphyrin IX. The polypeptide is Ferrochelatase (Synechococcus sp. (strain CC9605)).